Consider the following 122-residue polypeptide: Large ribosomal subunit protein uL14 (122 aa).

It belongs to the universal ribosomal protein uL14 family. As to quaternary structure, part of the 50S ribosomal subunit. Forms a cluster with proteins L3 and L19. In the 70S ribosome, L14 and L19 interact and together make contacts with the 16S rRNA in bridges B5 and B8.

Functionally, binds to 23S rRNA. Forms part of two intersubunit bridges in the 70S ribosome. The polypeptide is Large ribosomal subunit protein uL14 (Parafrankia sp. (strain EAN1pec)).